Reading from the N-terminus, the 231-residue chain is Large ribosomal subunit protein uL1 (231 aa).

The protein belongs to the universal ribosomal protein uL1 family. Part of the 50S ribosomal subunit.

Binds directly to 23S rRNA. The L1 stalk is quite mobile in the ribosome, and is involved in E site tRNA release. Functionally, protein L1 is also a translational repressor protein, it controls the translation of the L11 operon by binding to its mRNA. The chain is Large ribosomal subunit protein uL1 from Acinetobacter baylyi (strain ATCC 33305 / BD413 / ADP1).